The following is a 411-amino-acid chain: Argininosuccinate lyase (411 aa).

It belongs to the lyase 1 family. Argininosuccinate lyase subfamily.

It localises to the cytoplasm. It carries out the reaction 2-(N(omega)-L-arginino)succinate = fumarate + L-arginine. Its pathway is amino-acid biosynthesis; L-arginine biosynthesis; L-arginine from L-ornithine and carbamoyl phosphate: step 3/3. This chain is Argininosuccinate lyase, found in Legionella pneumophila (strain Paris).